The chain runs to 362 residues: Chorismate synthase (362 aa).

NADP(+) is bound at residue arginine 47. Residues 124 to 126, glycine 286, 301 to 305, and arginine 327 each bind FMN; these read RSS and KPTAT.

Belongs to the chorismate synthase family. Homotetramer. The cofactor is FMNH2.

The enzyme catalyses 5-O-(1-carboxyvinyl)-3-phosphoshikimate = chorismate + phosphate. It functions in the pathway metabolic intermediate biosynthesis; chorismate biosynthesis; chorismate from D-erythrose 4-phosphate and phosphoenolpyruvate: step 7/7. Its function is as follows. Catalyzes the anti-1,4-elimination of the C-3 phosphate and the C-6 proR hydrogen from 5-enolpyruvylshikimate-3-phosphate (EPSP) to yield chorismate, which is the branch point compound that serves as the starting substrate for the three terminal pathways of aromatic amino acid biosynthesis. This reaction introduces a second double bond into the aromatic ring system. In Trichormus variabilis (strain ATCC 29413 / PCC 7937) (Anabaena variabilis), this protein is Chorismate synthase.